Consider the following 119-residue polypeptide: Ribonuclease P protein component (119 aa).

It belongs to the RnpA family. Consists of a catalytic RNA component (M1 or rnpB) and a protein subunit.

It carries out the reaction Endonucleolytic cleavage of RNA, removing 5'-extranucleotides from tRNA precursor.. In terms of biological role, RNaseP catalyzes the removal of the 5'-leader sequence from pre-tRNA to produce the mature 5'-terminus. It can also cleave other RNA substrates such as 4.5S RNA. The protein component plays an auxiliary but essential role in vivo by binding to the 5'-leader sequence and broadening the substrate specificity of the ribozyme. The sequence is that of Ribonuclease P protein component from Klebsiella pneumoniae (strain 342).